Consider the following 246-residue polypeptide: Probable transcriptional regulatory protein RD1_2018 (246 aa).

The protein belongs to the TACO1 family.

Its subcellular location is the cytoplasm. This Roseobacter denitrificans (strain ATCC 33942 / OCh 114) (Erythrobacter sp. (strain OCh 114)) protein is Probable transcriptional regulatory protein RD1_2018.